The sequence spans 257 residues: Probable enoyl-CoA hydratase (257 aa).

Belongs to the enoyl-CoA hydratase/isomerase family.

The enzyme catalyses a (3S)-3-hydroxyacyl-CoA = a (2E)-enoyl-CoA + H2O. It carries out the reaction a 4-saturated-(3S)-3-hydroxyacyl-CoA = a (3E)-enoyl-CoA + H2O. Functionally, could possibly oxidize fatty acids using specific components. The sequence is that of Probable enoyl-CoA hydratase (fadB1) from Rhizobium meliloti (strain 1021) (Ensifer meliloti).